The primary structure comprises 86 residues: Acyl carrier protein (86 aa).

Residues 10-85 (DKIEQKVIEM…DVIKYIKERQ (76 aa)) enclose the Carrier domain. S45 bears the O-(pantetheine 4'-phosphoryl)serine mark.

The protein belongs to the acyl carrier protein (ACP) family. 4'-phosphopantetheine is transferred from CoA to a specific serine of apo-ACP by AcpS. This modification is essential for activity because fatty acids are bound in thioester linkage to the sulfhydryl of the prosthetic group.

The protein localises to the cytoplasm. The protein operates within lipid metabolism; fatty acid biosynthesis. Functionally, carrier of the growing fatty acid chain in fatty acid biosynthesis. The protein is Acyl carrier protein of Rickettsia africae (strain ESF-5).